The chain runs to 208 residues: Small ribosomal subunit protein uS4 (208 aa).

The interval 28–48 (YFEKRPYPPGEHGRARRRTES) is disordered. Positions 95–159 (MRLDALVLRS…ARTPFQVAAA (65 aa)) constitute an S4 RNA-binding domain.

It belongs to the universal ribosomal protein uS4 family. Part of the 30S ribosomal subunit. Contacts protein S5. The interaction surface between S4 and S5 is involved in control of translational fidelity.

One of the primary rRNA binding proteins, it binds directly to 16S rRNA where it nucleates assembly of the body of the 30S subunit. In terms of biological role, with S5 and S12 plays an important role in translational accuracy. The sequence is that of Small ribosomal subunit protein uS4 from Beutenbergia cavernae (strain ATCC BAA-8 / DSM 12333 / CCUG 43141 / JCM 11478 / NBRC 16432 / NCIMB 13614 / HKI 0122).